The chain runs to 399 residues: Phosphoglycerate kinase (399 aa).

Substrate-binding positions include 21-23 (DFN), arginine 36, 59-62 (HLGR), arginine 120, and arginine 158. ATP-binding positions include lysine 209, glycine 297, glutamate 328, and 355–358 (GGDS).

The protein belongs to the phosphoglycerate kinase family. As to quaternary structure, monomer.

It is found in the cytoplasm. It catalyses the reaction (2R)-3-phosphoglycerate + ATP = (2R)-3-phospho-glyceroyl phosphate + ADP. It functions in the pathway carbohydrate degradation; glycolysis; pyruvate from D-glyceraldehyde 3-phosphate: step 2/5. The polypeptide is Phosphoglycerate kinase (Streptococcus thermophilus (strain ATCC BAA-491 / LMD-9)).